A 190-amino-acid polypeptide reads, in one-letter code: Glutathione peroxidase 2 (190 aa).

U40 is an active-site residue. Position 40 (U40) is a non-standard amino acid, selenocysteine.

Belongs to the glutathione peroxidase family. As to quaternary structure, homotetramer.

Its subcellular location is the cytoplasm. It is found in the cytosol. The enzyme catalyses 2 glutathione + H2O2 = glutathione disulfide + 2 H2O. The catalysed reaction is a hydroperoxy polyunsaturated fatty acid + 2 glutathione = a hydroxy polyunsaturated fatty acid + glutathione disulfide + H2O. It carries out the reaction tert-butyl hydroperoxide + 2 glutathione = tert-butanol + glutathione disulfide + H2O. It catalyses the reaction cumene hydroperoxide + 2 glutathione = 2-phenylpropan-2-ol + glutathione disulfide + H2O. The enzyme catalyses (13S)-hydroperoxy-(9Z,11E)-octadecadienoate + 2 glutathione = (13S)-hydroxy-(9Z,11E)-octadecadienoate + glutathione disulfide + H2O. The catalysed reaction is (5S)-hydroperoxy-(6E,8Z,11Z,14Z)-eicosatetraenoate + 2 glutathione = (5S)-hydroxy-(6E,8Z,11Z,14Z)-eicosatetraenoate + glutathione disulfide + H2O. It carries out the reaction (12R)-hydroperoxy-(5Z,8Z,10E,14Z)-eicosatetraenoate + 2 glutathione = (12R)-hydroxy-(5Z,8Z,10E,14Z)-eicosatetraenoate + glutathione disulfide + H2O. It catalyses the reaction (15S)-hydroperoxy-(5Z,8Z,11Z,13E)-eicosatetraenoate + 2 glutathione = (15S)-hydroxy-(5Z,8Z,11Z,13E)-eicosatetraenoate + glutathione disulfide + H2O. In terms of biological role, catalyzes the reduction of hydroperoxides in a glutathione-dependent manner thus regulating cellular redox homeostasis. Can reduce small soluble hydroperoxides such as H2O2, cumene hydroperoxide and tert-butyl hydroperoxide, as well as several fatty acid-derived hydroperoxides. Cannot reduce phosphatidycholine hydroperoxide. This is Glutathione peroxidase 2 (GPX2) from Callithrix jacchus (White-tufted-ear marmoset).